Reading from the N-terminus, the 211-residue chain is Large ribosomal subunit protein uL3 (211 aa).

Position 150 is an N5-methylglutamine (Gln-150).

It belongs to the universal ribosomal protein uL3 family. As to quaternary structure, part of the 50S ribosomal subunit. Forms a cluster with proteins L14 and L19. In terms of processing, methylated by PrmB.

In terms of biological role, one of the primary rRNA binding proteins, it binds directly near the 3'-end of the 23S rRNA, where it nucleates assembly of the 50S subunit. The polypeptide is Large ribosomal subunit protein uL3 (Pseudomonas syringae pv. syringae (strain B728a)).